The following is a 204-amino-acid chain: Large ribosomal subunit protein eL15 (204 aa).

It belongs to the eukaryotic ribosomal protein eL15 family. Component of the large ribosomal subunit.

The protein resides in the cytoplasm. Component of the large ribosomal subunit. The ribosome is a large ribonucleoprotein complex responsible for the synthesis of proteins in the cell. This chain is Large ribosomal subunit protein eL15 (rpl15), found in Paramisgurnus dabryanus.